We begin with the raw amino-acid sequence, 140 residues long: Cytochrome B5 isoform D (140 aa).

A Cytochrome b5 heme-binding domain is found at Gly-5–Asp-81. Residues His-40 and His-64 each coordinate heme. The helical transmembrane segment at Phe-109 to Ile-129 threads the bilayer.

Belongs to the cytochrome b5 family. In terms of assembly, interacts with CER1, BI-1, FAH1 and FAH2. Expressed in roots, stems, leaves, flowers and siliques.

Its subcellular location is the endoplasmic reticulum membrane. Functionally, membrane bound hemoprotein which function as an electron carrier for several membrane bound oxygenases, including fatty acid desaturases. In Arabidopsis thaliana (Mouse-ear cress), this protein is Cytochrome B5 isoform D.